A 118-amino-acid chain; its full sequence is Myotrophin (118 aa).

Cysteine 2 is subject to N-acetylcysteine. The stretch at 2-30 (CDKEFMWALKNGDLDEVKDYVAKGEDVNR) is one ANK 1 repeat. Residues lysine 4, lysine 11, and lysine 24 each carry the N6-acetyllysine modification. Threonine 31 carries the phosphothreonine modification. ANK repeat units lie at residues 34–66 (GGRK…APDK) and 67–99 (HHIT…VKGP).

It belongs to the myotrophin family. In terms of assembly, interacts with RELA. Interacts with the heterodimer formed by CAPZA1 and CAPZB.

The protein localises to the cytoplasm. Its subcellular location is the nucleus. It is found in the perinuclear region. Its function is as follows. Promotes dimerization of NF-kappa-B subunits and regulates NF-kappa-B transcription factor activity. Promotes growth of cardiomyocytes, but not cardiomyocyte proliferation. Promotes cardiac muscle hypertrophy. Plays a role in the regulation of the growth of actin filaments. Inhibits the activity of the F-actin-capping protein complex formed by the CAPZA1 and CAPZB heterodimer. The protein is Myotrophin (MTPN) of Bos taurus (Bovine).